We begin with the raw amino-acid sequence, 145 residues long: Basic phospholipase A2 S6-45 (145 aa).

An N-terminal signal peptide occupies residues Met-1–Ala-19. Positions Ser-20 to Leu-27 are excised as a propeptide. Cystine bridges form between Cys-38–Cys-99, Cys-54–Cys-144, Cys-56–Cys-72, Cys-71–Cys-127, Cys-78–Cys-120, Cys-88–Cys-113, and Cys-106–Cys-118. Residues Tyr-55, Gly-57, and Gly-59 each coordinate Ca(2+). His-75 is a catalytic residue. Asp-76 contributes to the Ca(2+) binding site. Residue Asp-121 is part of the active site.

This sequence belongs to the phospholipase A2 family. Group I subfamily. D49 sub-subfamily. The cofactor is Ca(2+). Expressed by the venom gland.

It localises to the secreted. The catalysed reaction is a 1,2-diacyl-sn-glycero-3-phosphocholine + H2O = a 1-acyl-sn-glycero-3-phosphocholine + a fatty acid + H(+). Its function is as follows. Snake venom phospholipase A2 (PLA2) that inhibits collagen-induced platelet aggregation. PLA2 catalyzes the calcium-dependent hydrolysis of the 2-acyl groups in 3-sn-phosphoglycerides. The polypeptide is Basic phospholipase A2 S6-45 (Austrelaps superbus (Lowland copperhead snake)).